Consider the following 142-residue polypeptide: Pleckstrin homology-like domain family A member 2 (142 aa).

Ser3 is subject to Phosphoserine. Positions 7 to 99 (VLREGELEKR…WNASITLALI (93 aa)) constitute a PH domain.

The protein belongs to the PHLDA2 family.

It is found in the cytoplasm. The protein resides in the membrane. Functionally, plays a role in regulating placenta growth. May act via its PH domain that competes with other PH domain-containing proteins, thereby preventing their binding to membrane lipids. The chain is Pleckstrin homology-like domain family A member 2 (PHLDA2) from Bos taurus (Bovine).